We begin with the raw amino-acid sequence, 619 residues long: MINKKRLLLSTVSIMVISGWNQASAAVESQDSLVVTASRFKQPISSILAPYTVVTRDEIDRWQSNSVADILRRLPGVDIARHGGIGQLSSLFIRGTHASHVLVLMDGIRLNQAGISGSSDLSQIPVSLVQKIEYIRGPRSAVYGSDAIGGVINIITTREKLGTSLNVGIGSHGYQTYDGATQQTLAENTVLTAAANYTYTKGYDVVADGNTGGFRQPDRDGFMSKMLWLGVDQKFNEQVSGFVRAYGYNNRTSYDADINWSYPYARPDTRELYSRHYDMGVRFNQGIYSSQLITSYSHTKDYNFDPQYGRYDKSASLNDSEQYNLQWGNTFQLYQGIVSTGVDFQKQSIEAGTSYIPKSKTVRNTGMYLTAQQQLKDFILEGAIRSDKHSEAGWNTTWQASLGWEFIKDYRLIASYGTAFKAPTLSQMYGFGGNHDLKPEESKQWEGGIEGVTGQLTWRMTVYRNEIEQLIDYANSRYYNIGKAKIKGVEWTGLIDTGMFQHQLTIQYIDPRNSETNEILVRRAKQQVKYQLDWQLYDFDWGLTYQYLGRRYDKDFSTSPAKRVKLGGVSFWDLTVSYPVTSYLTIRARIANLLDKDYETVYGYRIPGREYYLTGSYNF.

An N-terminal signal peptide occupies residues 1 to 25; it reads MINKKRLLLSTVSIMVISGWNQASA. The short motif at 31 to 38 is the TonB box element; that stretch reads DSLVVTAS. The region spanning 43–157 is the TBDR plug domain; it reads PISSILAPYT…IGGVINIITT (115 aa). Cyanocob(III)alamin contacts are provided by residues Leu88, Ser90, and 115-116; that span reads IS. The region spanning 160-619 is the TBDR beta-barrel domain; it reads KLGTSLNVGI…EYYLTGSYNF (460 aa). The next 3 beta stranded transmembrane spans lie at 163–170, 174–183, and 189–200; these read TSLNVGIG, YQTYDGATQQ, and TVLTAAANYTYT. Residues Asp204, Gln216, Asp218, and Asp220 each coordinate Ca(2+). 2 beta stranded membrane passes run 222–232 and 237–253; these read FMSKMLWLGVD and EQVSGFVRAYGYNNRTS. Ca(2+) contacts are provided by Tyr254 and Asp255. Position 256 (Ala256) interacts with cyanocob(III)alamin. Asp268 contributes to the Ca(2+) binding site. 17 beta stranded membrane passes run 270-284, 286-303, 316-332, 335-344, 360-376, 378-388, 392-407, 410-424, 441-450, 456-465, 478-495, 499-514, 522-534, 540-556, 563-577, 590-601, and 607-619; these read RELYSRHYDMGVRFN, GIYSSQLITSYSHTKDYN, SLNDSEQYNLQWGNTFQ, QGIVSTGVDF, KTVRNTGMYLTAQQQLK, FILEGAIRSDK, AGWNTTWQASLGWEFI, YRLIASYGTAFKAPT, ESKQWEGGIE, LTWRMTVYRN, YYNIGKAKIKGVEWTGLI, MFQHQLTIQYIDPRNS, RRAKQQVKYQLDW, DWGLTYQYLGRRYDKDF, RVKLGGVSFWDLTVS, IANLLDKDYETV, and PGREYYLTGSYNF. Ser316 provides a ligand contact to cyanocob(III)alamin. Cyanocob(III)alamin is bound at residue Arg522. The TonB C-terminal box motif lies at 602–619; the sequence is YGYRIPGREYYLTGSYNF.

Belongs to the TonB-dependent receptor family. BtuB (TC 1.B.14.3.1) subfamily.

It localises to the cell outer membrane. Its function is as follows. Involved in the active translocation of vitamin B12 (cyanocobalamin) across the outer membrane to the periplasmic space. It derives its energy for transport by interacting with the trans-periplasmic membrane protein TonB. This chain is Vitamin B12 transporter BtuB, found in Photorhabdus laumondii subsp. laumondii (strain DSM 15139 / CIP 105565 / TT01) (Photorhabdus luminescens subsp. laumondii).